A 263-amino-acid chain; its full sequence is Fructose-bisphosphate aldolase class 1 (263 aa).

Substrate is bound by residues 24–25 (DH), His29, Asp33, and Trp144. Tyr146 functions as the Proton donor in the catalytic mechanism. Residues Arg148, 177 to 179 (KIK), 202 to 204 (SGG), and 231 to 232 (GR) each bind substrate. Lys177 (schiff-base intermediate with dihydroxyacetone-P) is an active-site residue.

The protein belongs to the DeoC/FbaB aldolase family. In terms of assembly, homodecamer (dimer of pentamers).

The protein localises to the cytoplasm. It carries out the reaction beta-D-fructose 1,6-bisphosphate = D-glyceraldehyde 3-phosphate + dihydroxyacetone phosphate. Its activity is regulated as follows. Activated by citrate. Functionally, catalyzes the reversible cleavage of fructose 1,6-bisphosphate (FBP) to glyceraldehyde 3-phosphate (GAP) and dihydroxyacetone phosphate (DHAP). This is Fructose-bisphosphate aldolase class 1 (fba) from Thermoproteus tenax (strain ATCC 35583 / DSM 2078 / JCM 9277 / NBRC 100435 / Kra 1).